The chain runs to 493 residues: GPI alpha-1,6-mannosyltransferase 2 (493 aa).

Residues Met1–Arg13 are Cytoplasmic-facing. The chain crosses the membrane as a helical span at residues Phe14 to Pro34. The Lumenal portion of the chain corresponds to Asp35–His77. Residues Gly78–Gly98 form a helical membrane-spanning segment. Over Thr99–Ser113 the chain is Cytoplasmic. Residues Cys114–Leu134 form a helical membrane-spanning segment. At His135 to Asp136 the chain is on the lumenal side. A helical membrane pass occupies residues Leu137–Ile157. The Cytoplasmic segment spans residues Ser158–Asn161. A helical membrane pass occupies residues Val162–Gly182. At Gln183 to Ser192 the chain is on the lumenal side. Residues Gly193–Leu213 form a helical membrane-spanning segment. The Cytoplasmic portion of the chain corresponds to Leu214 to Leu234. A helical transmembrane segment spans residues Val235–Phe255. The Lumenal portion of the chain corresponds to Gln256 to Asn327. A helical membrane pass occupies residues Phe328–Thr348. Residues His349–Lys378 lie on the Cytoplasmic side of the membrane. A helical membrane pass occupies residues Val379–Val399. Over Gln400–Arg469 the chain is Lumenal. The helical transmembrane segment at Cys470–Leu490 threads the bilayer. At Pro491–Thr493 the chain is on the cytoplasmic side.

It belongs to the PIGV family. In terms of processing, not N-glycosylated.

It localises to the endoplasmic reticulum membrane. It participates in glycolipid biosynthesis; glycosylphosphatidylinositol-anchor biosynthesis. Its function is as follows. Alpha-1,6-mannosyltransferase that catalyzes the transfer of the second mannose, via an alpha-1,6 bond, from a dolichol-phosphate-mannose (Dol-P-Man) to the alpha-D-Man-(1-&gt;4)-alpha-D-GlcN-(1-&gt;6)-(1-radyl,2-acyl-sn-glycero-3-phospho)-2-acyl-inositol (also termed H2) intermediate to generate an alpha-D-Man-(1-&gt;6)-alpha-D-Man-(1-&gt;4)-alpha-D-GlcN-(1-&gt;6)-(1-radyl,2-acyl-sn-glycero-3-phospho)-2-acyl-inositol (also termed H3) and participates in the seventh step of the glycosylphosphatidylinositol-anchor biosynthesis. Also transfers the second mannose on a 2-PEtn-alpha-D-Man-(1-&gt;4)-alpha-D-GlcN-(1-&gt;6)-(1-radyl,2-acyl-sn-glycero-3-phospho)-2-acyl-inositol (also termed H5). The polypeptide is GPI alpha-1,6-mannosyltransferase 2 (Mus musculus (Mouse)).